The primary structure comprises 368 residues: Phosphoribosylformylglycinamidine cyclo-ligase (368 aa).

The protein belongs to the AIR synthase family.

Its subcellular location is the cytoplasm. The enzyme catalyses 2-formamido-N(1)-(5-O-phospho-beta-D-ribosyl)acetamidine + ATP = 5-amino-1-(5-phospho-beta-D-ribosyl)imidazole + ADP + phosphate + H(+). The protein operates within purine metabolism; IMP biosynthesis via de novo pathway; 5-amino-1-(5-phospho-D-ribosyl)imidazole from N(2)-formyl-N(1)-(5-phospho-D-ribosyl)glycinamide: step 2/2. The chain is Phosphoribosylformylglycinamidine cyclo-ligase from Chelativorans sp. (strain BNC1).